A 146-amino-acid polypeptide reads, in one-letter code: Anti-sigma F factor (146 aa).

This sequence belongs to the anti-sigma-factor family.

It catalyses the reaction L-seryl-[protein] + ATP = O-phospho-L-seryl-[protein] + ADP + H(+). The catalysed reaction is L-threonyl-[protein] + ATP = O-phospho-L-threonyl-[protein] + ADP + H(+). Its function is as follows. Binds to sigma F and blocks its ability to form an RNA polymerase holoenzyme (E-sigma F). Phosphorylates SpoIIAA on a serine residue. This phosphorylation may enable SpoIIAA to act as an anti-anti-sigma factor that counteracts SpoIIAB and thus releases sigma F from inhibition. This Bacillus cereus (strain G9842) protein is Anti-sigma F factor.